Here is a 136-residue protein sequence, read N- to C-terminus: Nucleoside diphosphate kinase (136 aa).

Residues lysine 10, phenylalanine 58, arginine 86, threonine 92, arginine 104, and asparagine 114 each contribute to the ATP site. Residue histidine 117 is the Pros-phosphohistidine intermediate of the active site.

Belongs to the NDK family. As to quaternary structure, homotetramer. Mg(2+) serves as cofactor.

Its subcellular location is the cytoplasm. The enzyme catalyses a 2'-deoxyribonucleoside 5'-diphosphate + ATP = a 2'-deoxyribonucleoside 5'-triphosphate + ADP. It carries out the reaction a ribonucleoside 5'-diphosphate + ATP = a ribonucleoside 5'-triphosphate + ADP. Major role in the synthesis of nucleoside triphosphates other than ATP. The ATP gamma phosphate is transferred to the NDP beta phosphate via a ping-pong mechanism, using a phosphorylated active-site intermediate. The sequence is that of Nucleoside diphosphate kinase from Mycolicibacterium paratuberculosis (strain ATCC BAA-968 / K-10) (Mycobacterium paratuberculosis).